We begin with the raw amino-acid sequence, 135 residues long: Ribonuclease VapC26 (135 aa).

The 118-residue stretch at 1-118 folds into the PINc domain; that stretch reads MIIDTSALLA…TRTILTLDRR (118 aa). Positions 4 and 97 each coordinate Mg(2+).

This sequence belongs to the PINc/VapC protein family. Requires Mg(2+) as cofactor.

Functionally, toxic component of a type II toxin-antitoxin (TA) system. An RNase. Upon expression in M.smegmatis inhibits colony formation. Its toxic effect is neutralized by coexpression with cognate antitoxin VapB26. In Mycobacterium tuberculosis (strain ATCC 25618 / H37Rv), this protein is Ribonuclease VapC26.